The chain runs to 357 residues: Probable dual-specificity RNA methyltransferase RlmN (357 aa).

Glu-92 acts as the Proton acceptor in catalysis. The Radical SAM core domain maps to 98–330 (QEYGLSVCVT…KKNGINCVIR (233 aa)). The cysteines at positions 105 and 341 are disulfide-linked. [4Fe-4S] cluster is bound by residues Cys-112, Cys-116, and Cys-119. Residues 164–165 (GE), Ser-196, 219–221 (SLH), and Asn-297 each bind S-adenosyl-L-methionine. Catalysis depends on Cys-341, which acts as the S-methylcysteine intermediate.

It belongs to the radical SAM superfamily. RlmN family. The cofactor is [4Fe-4S] cluster.

Its subcellular location is the cytoplasm. It carries out the reaction adenosine(2503) in 23S rRNA + 2 reduced [2Fe-2S]-[ferredoxin] + 2 S-adenosyl-L-methionine = 2-methyladenosine(2503) in 23S rRNA + 5'-deoxyadenosine + L-methionine + 2 oxidized [2Fe-2S]-[ferredoxin] + S-adenosyl-L-homocysteine. It catalyses the reaction adenosine(37) in tRNA + 2 reduced [2Fe-2S]-[ferredoxin] + 2 S-adenosyl-L-methionine = 2-methyladenosine(37) in tRNA + 5'-deoxyadenosine + L-methionine + 2 oxidized [2Fe-2S]-[ferredoxin] + S-adenosyl-L-homocysteine. In terms of biological role, specifically methylates position 2 of adenine 2503 in 23S rRNA and position 2 of adenine 37 in tRNAs. The polypeptide is Probable dual-specificity RNA methyltransferase RlmN (Enterococcus faecalis (strain ATCC 700802 / V583)).